Reading from the N-terminus, the 308-residue chain is Zinc finger CCCH domain-containing protein 15 (308 aa).

The interval 1–21 is disordered; the sequence is MENKIAPFSYSGSSAGNSSSG. The span at 9 to 21 shows a compositional bias: low complexity; that stretch reads SYSGSSAGNSSSG. Residues 56 to 91 are a coiled coil; that stretch reads TRLHEASLEAEALRLENTELRSMNLRLKNELNSLIR. Residues 110 to 190 are disordered; sequence LSIGGNDADE…GTVTKPGTCG (81 aa). At Ser-111 the chain carries Phosphoserine. Over residues 148-164 the composition is skewed to polar residues; that stretch reads RSSLPKSISVRSNGYSK. 2 consecutive C3H1-type zinc fingers follow at residues 222 to 250 and 260 to 288; these read MTKTELCNKWQETGTCPYGDHCQFAHGIK and RYKTEVCRMVLAGDNCPYGHRCHFRHSLS.

In terms of processing, phosphorylated at Ser-111 by ASK7/BIN2 in the cytoplasm in the absence of brassinosteroids (BRs). In terms of tissue distribution, highly expressed in secondary cell wall-forming tissues and the xylem cells of roots. Expressed predominantly in inflorescence stems, flowers and siliques. Highly expressed in the basal portion of stems, where cells are undergoing secondary cell wall thickening. Highly expressed in meiocytes and tapetum from anthers.

It localises to the cytoplasm. It is found in the nucleus. Its function is as follows. Functions probably as a transcriptional factor that activates genes involved in secondary cell wall biosynthesis. Functions redudantly with C3H14 to regulate secondary cell wall formation. C3H14 and C3H15 have overlapping roles in the regulation of secondary cell wall formation and anther development. C3H14 may contribute more to secondary cell wall thickening while C3H15 could be more important in anther development. May regulate at both the transcriptional and post-transcriptional levels the expression of many genes involved in various biological processes, particularly those associated with cell wall metabolism and pollen development. Involved in the regulation of callose metabolism in male meiocytes, in integrity of newly formed microspores, and promotes male fertility. May be involved in the regulation of the callose synthesis genes CALS5 and CALS12, the potential degradation of callose walls-related genes A6 and MYB80, as well as other putative beta-1,3-glucanase genes. Negatively regulates cell elongation by inhibiting brassinosteroid (BR) signaling. Functions downstream of the BRI1 receptor as a negative regulator in the BR pathway. The sequence is that of Zinc finger CCCH domain-containing protein 15 from Arabidopsis thaliana (Mouse-ear cress).